Here is a 910-residue protein sequence, read N- to C-terminus: Dimethylsulfide dehydrogenase subunit alpha (910 aa).

A signal peptide (tat-type signal) is located at residues 1-28 (MLRTTRRTLMQGASLVGAGLFAAGRGWA). A 4Fe-4S Mo/W bis-MGD-type domain is found at 59–123 (DYVGKAAHCI…IHSTSMYEAD (65 aa)). His66, Cys70, Cys74, and Cys109 together coordinate [4Fe-4S] cluster.

Belongs to the prokaryotic molybdopterin-containing oxidoreductase family. Heterotrimer of alpha, beta and gamma subunits. [4Fe-4S] cluster serves as cofactor. The cofactor is Mo-bis(molybdopterin guanine dinucleotide). In terms of processing, predicted to be exported by the Tat system. The position of the signal peptide cleavage has been experimentally proven.

It is found in the periplasm. The enzyme catalyses 2 Fe(III)-[cytochrome c2] + dimethyl sulfide + H2O = 2 Fe(II)-[cytochrome c2] + dimethyl sulfoxide + 2 H(+). In terms of biological role, allows photoautotrophic growth on dimethyl sulfide (DMS) as the sole electron donor. In Rhodovulum sulfidophilum (Rhodobacter sulfidophilus), this protein is Dimethylsulfide dehydrogenase subunit alpha (ddhA).